Reading from the N-terminus, the 156-residue chain is Holliday junction resolvase (156 aa).

It belongs to the RuvC family. Poxviruses-type subfamily. It depends on Mg(2+) as a cofactor.

Its function is as follows. Nuclease that specifically cleaves and resolves four-way DNA Holliday junctions into linear duplex products. The sequence is that of Holliday junction resolvase from Vertebrata (FPV).